Reading from the N-terminus, the 311-residue chain is Ribosomal RNA small subunit methyltransferase H 1 (311 aa).

Residues 33 to 35 (AGH), Asp-53, Phe-80, Asp-101, and Gln-108 contribute to the S-adenosyl-L-methionine site.

The protein belongs to the methyltransferase superfamily. RsmH family.

It is found in the cytoplasm. It catalyses the reaction cytidine(1402) in 16S rRNA + S-adenosyl-L-methionine = N(4)-methylcytidine(1402) in 16S rRNA + S-adenosyl-L-homocysteine + H(+). Specifically methylates the N4 position of cytidine in position 1402 (C1402) of 16S rRNA. The protein is Ribosomal RNA small subunit methyltransferase H 1 of Alkaliphilus metalliredigens (strain QYMF).